Here is a 135-residue protein sequence, read N- to C-terminus: uncharacterized protein (135 aa).

2 helical membrane-spanning segments follow: residues 11-31 (ILFF…GYLI) and 57-77 (LGTA…TDAI).

The protein localises to the cell membrane. This is an uncharacterized protein from Methanocaldococcus jannaschii (strain ATCC 43067 / DSM 2661 / JAL-1 / JCM 10045 / NBRC 100440) (Methanococcus jannaschii).